Reading from the N-terminus, the 748-residue chain is 5-methyltetrahydropteroyltriglutamate--homocysteine methyltransferase (748 aa).

5-methyltetrahydropteroyltri-L-glutamate contacts are provided by residues 18–21 (REWK) and lysine 112. Residues 420 to 422 (IGS) and glutamate 473 each bind L-homocysteine. L-methionine is bound by residues 420–422 (IGS) and glutamate 473. Tryptophan 550 contributes to the 5-methyltetrahydropteroyltri-L-glutamate binding site. Aspartate 588 contacts L-homocysteine. Aspartate 588 contacts L-methionine. Glutamate 594 contributes to the 5-methyltetrahydropteroyltri-L-glutamate binding site. The Zn(2+) site is built by histidine 630, cysteine 632, and glutamate 654. Histidine 683 (proton donor) is an active-site residue. Cysteine 715 serves as a coordination point for Zn(2+).

Belongs to the vitamin-B12 independent methionine synthase family. It depends on Zn(2+) as a cofactor.

The catalysed reaction is 5-methyltetrahydropteroyltri-L-glutamate + L-homocysteine = tetrahydropteroyltri-L-glutamate + L-methionine. It participates in amino-acid biosynthesis; L-methionine biosynthesis via de novo pathway; L-methionine from L-homocysteine (MetE route): step 1/1. Functionally, catalyzes the transfer of a methyl group from 5-methyltetrahydrofolate to homocysteine resulting in methionine formation. This chain is 5-methyltetrahydropteroyltriglutamate--homocysteine methyltransferase, found in Staphylococcus epidermidis (strain ATCC 12228 / FDA PCI 1200).